A 111-amino-acid chain; its full sequence is Somatostatin-1B (111 aa).

A signal peptide spans 1–19; it reads MQLLSSLVSLLLVLYSVRA. Positions 20–87 are excised as a propeptide; it reads AAVLPVEERN…RLEERAVYNR (68 aa). C100 and C111 form a disulfide bridge.

The protein belongs to the somatostatin family.

It localises to the secreted. In terms of biological role, somatostatin inhibits the release of somatotropin. This is Somatostatin-1B (sst1b) from Carassius auratus (Goldfish).